The sequence spans 227 residues: Cytidylate kinase (227 aa).

10-18 contacts ATP; it reads GPASSGKST.

It belongs to the cytidylate kinase family. Type 1 subfamily.

The protein localises to the cytoplasm. The catalysed reaction is CMP + ATP = CDP + ADP. It carries out the reaction dCMP + ATP = dCDP + ADP. The chain is Cytidylate kinase from Streptococcus agalactiae serotype V (strain ATCC BAA-611 / 2603 V/R).